Here is a 420-residue protein sequence, read N- to C-terminus: Serine hydroxymethyltransferase (420 aa).

(6S)-5,6,7,8-tetrahydrofolate contacts are provided by residues L121 and 125-127 (GHL). K230 is modified (N6-(pyridoxal phosphate)lysine). (6S)-5,6,7,8-tetrahydrofolate-binding positions include E246 and 354–356 (SPF).

This sequence belongs to the SHMT family. Homodimer. Requires pyridoxal 5'-phosphate as cofactor.

The protein resides in the cytoplasm. It catalyses the reaction (6R)-5,10-methylene-5,6,7,8-tetrahydrofolate + glycine + H2O = (6S)-5,6,7,8-tetrahydrofolate + L-serine. It participates in one-carbon metabolism; tetrahydrofolate interconversion. It functions in the pathway amino-acid biosynthesis; glycine biosynthesis; glycine from L-serine: step 1/1. Catalyzes the reversible interconversion of serine and glycine with tetrahydrofolate (THF) serving as the one-carbon carrier. This reaction serves as the major source of one-carbon groups required for the biosynthesis of purines, thymidylate, methionine, and other important biomolecules. Also exhibits THF-independent aldolase activity toward beta-hydroxyamino acids, producing glycine and aldehydes, via a retro-aldol mechanism. The chain is Serine hydroxymethyltransferase from Rickettsia prowazekii (strain Madrid E).